We begin with the raw amino-acid sequence, 96 residues long: Small ribosomal subunit protein bS6 (96 aa).

It belongs to the bacterial ribosomal protein bS6 family.

Binds together with bS18 to 16S ribosomal RNA. In Mycobacterium bovis (strain ATCC BAA-935 / AF2122/97), this protein is Small ribosomal subunit protein bS6 (rpsF).